Consider the following 1248-residue polypeptide: Ankyrin repeat and sterile alpha motif domain-containing protein 1B (1248 aa).

ANK repeat units follow at residues 2-31 (GKDQELLEAARTGNVALVEKLLSGRKGGIL), 58-87 (SGYTALHHAALNGHKDIVLKLLQYEASTNV), 91-120 (KGYFPIHLAAWKGDVEIVKILIHHGPSHSR), 127-156 (ENETALHCAAQYGHSEVVAVLLEELTDPTI), 160-189 (KLETPLDLAALYGRLRVVKMIISAHPNLMS), 193-222 (RKHTPLHLAARNGHKAVVQVLLEAGMDVSC), and 225-254 (EKGSALHEAALFGKVDVVRVLLETGIDANI). The tract at residues 296-322 (EPVQEDATQETHISSPVESPSQKTKSE) is disordered. Residues 305 to 322 (ETHISSPVESPSQKTKSE) are compositionally biased toward polar residues. A phosphoserine mark is found at serine 309, serine 310, serine 314, serine 353, and serine 364. 3 disordered regions span residues 367–400 (ELGKNGSQSVRTSSTINLSPGEVEEEDDDENTCG), 474–514 (APSP…PDTA), and 558–623 (SFTA…ENPF). The segment covering 371 to 384 (NGSQSVRTSSTINL) has biased composition (polar residues). A compositionally biased stretch (acidic residues) spans 388–397 (EVEEEDDDEN). Residue threonine 503 is modified to Phosphothreonine. A phosphoserine mark is found at serine 507 and serine 510. Low complexity predominate over residues 558 to 575 (SFTASPPASPPTSSVGTT). A compositionally biased stretch (basic and acidic residues) spans 577-601 (VKNEGTNHTDDLSRQDDNDPPKEYD). Serine 738 bears the Phosphoserine mark. The tract at residues 749–777 (EKTSRVNWSESSTAEHSSKGNSERTPSFT) is disordered. The segment covering 753–763 (RVNWSESSTAE) has biased composition (polar residues). The residue at position 773 (threonine 773) is a Phosphothreonine. Serine 775 is subject to Phosphoserine. 2 SAM domains span residues 810 to 876 (CPVQ…LPKM) and 884 to 949 (YHPT…RLHD). The residue at position 901 (tyrosine 901) is a Phosphotyrosine. A Nuclear localization signal motif is present at residues 935 to 938 (HRKR). A disordered region spans residues 944-989 (GDRLHDDPPQKPPRSITLREPSGNHTPPQLSPSLSQSTYTTGGSLD). Residues 969–984 (TPPQLSPSLSQSTYTT) are compositionally biased toward low complexity. A Phosphoserine modification is found at serine 974. At tyrosine 1007 the chain carries Phosphotyrosine. The PID domain occupies 1056 to 1213 (IFQSCDYKAF…SFENKPSKPI (158 aa)). The segment at 1197-1248 (HSSTLPESFENKPSKPIPKPRVSIRKSVDLLHASHTGQEPSERHTEEALRKF) is disordered. Basic and acidic residues predominate over residues 1236–1248 (PSERHTEEALRKF).

In terms of assembly, isoform 3 interacts with DLG4. Interacts with EPHA8. Isoform 2 interacts with COIL. Isoform 4 interacts with APP and EPHA8. Isoform 6 interacts with EPHA8. Post-translationally, isoform 3 nuclear translocation requires an NMDAR-dependent proteolytic cleavage. Highly expressed in marrow from patients with pre-B ALL associated with the t(1;19) translocation. Strongly expressed in brain and testis. Expressed in fetal brain. Isoform 4 is highly expressed in brain (at protein level). Isoform 6 is expressed in brain and several cancer cell lines.

The protein localises to the cytoplasm. It is found in the nucleus. Its subcellular location is the postsynaptic density. The protein resides in the cell projection. It localises to the dendritic spine. The protein localises to the cajal body. Functionally, isoform 2 may participate in the regulation of nucleoplasmic coilin protein interactions in neuronal and transformed cells. Isoform 3 can regulate global protein synthesis by altering nucleolar numbers. In terms of biological role, isoform 4 may play a role as a modulator of APP processing. Overexpression can down-regulate APP processing. The chain is Ankyrin repeat and sterile alpha motif domain-containing protein 1B (ANKS1B) from Homo sapiens (Human).